We begin with the raw amino-acid sequence, 234 residues long: Protein UL20 homolog (234 aa).

The next 4 membrane-spanning stretches (helical) occupy residues 82 to 102, 112 to 132, 153 to 173, and 191 to 211; these read VVLFGLSTFVLRPSCCLIFLF, FLILGTTITAFFYGTLMLEMY, IGALSMLGPIIFVAISYNMIF, and TSGFVIYLVMIASLAYSITSI.

This sequence belongs to the alphaherpesvirinae UL20 family. Interacts with gK (via N-terminus); this interaction plays a role in the coordinate transport of UL20 and gK to the trans-Golgi network (TGN), and is required for their cell surface expression. Interacts with gB.

Its subcellular location is the virion. The protein resides in the host cell membrane. The protein localises to the host endosome membrane. It localises to the host Golgi apparatus membrane. It is found in the host nucleus membrane. Plays an essential role in egress of virus particles from the nucleus, cytoplasmic envelopment and virus-induced cell fusion. Forms a functional protein complex with gK and this interaction is absolutely essential for their coordinate intracellular transport, gK glycosylation, expression on host cell surface, and function. Together, they modulate gB-mediated virus-induced cell fusion and virion egress and therefore actively participate in these processes. This Gallid herpesvirus 2 (strain Chicken/Md5/ATCC VR-987) (GaHV-2) protein is Protein UL20 homolog (MDV032).